A 590-amino-acid chain; its full sequence is DNA mismatch repair protein MutL (590 aa).

The segment covering 335–351 (PLSSASPKLPESTTATA) has biased composition (polar residues). The interval 335-354 (PLSSASPKLPESTTATAQPH) is disordered.

Belongs to the DNA mismatch repair MutL/HexB family.

This protein is involved in the repair of mismatches in DNA. It is required for dam-dependent methyl-directed DNA mismatch repair. May act as a 'molecular matchmaker', a protein that promotes the formation of a stable complex between two or more DNA-binding proteins in an ATP-dependent manner without itself being part of a final effector complex. The polypeptide is DNA mismatch repair protein MutL (Dichelobacter nodosus (strain VCS1703A)).